The primary structure comprises 541 residues: Glucose-6-phosphate isomerase (541 aa).

The active-site Proton donor is Glu-346. Catalysis depends on residues His-377 and Lys-506.

It belongs to the GPI family.

The protein localises to the cytoplasm. The catalysed reaction is alpha-D-glucose 6-phosphate = beta-D-fructose 6-phosphate. It functions in the pathway carbohydrate biosynthesis; gluconeogenesis. The protein operates within carbohydrate degradation; glycolysis; D-glyceraldehyde 3-phosphate and glycerone phosphate from D-glucose: step 2/4. In terms of biological role, catalyzes the reversible isomerization of glucose-6-phosphate to fructose-6-phosphate. This chain is Glucose-6-phosphate isomerase, found in Rhizobium etli (strain ATCC 51251 / DSM 11541 / JCM 21823 / NBRC 15573 / CFN 42).